A 215-amino-acid chain; its full sequence is Large ribosomal subunit protein bL25 (215 aa).

Residues 174-215 (ETVVTVQPPATEKEEETEAAVTDSEPEVINEKEEPAEEAKEE) form a disordered region. The segment covering 186–215 (KEEETEAAVTDSEPEVINEKEEPAEEAKEE) has biased composition (acidic residues).

The protein belongs to the bacterial ribosomal protein bL25 family. CTC subfamily. As to quaternary structure, part of the 50S ribosomal subunit; part of the 5S rRNA/L5/L18/L25 subcomplex. Contacts the 5S rRNA. Binds to the 5S rRNA independently of L5 and L18.

Functionally, this is one of the proteins that binds to the 5S RNA in the ribosome where it forms part of the central protuberance. This is Large ribosomal subunit protein bL25 from Halalkalibacterium halodurans (strain ATCC BAA-125 / DSM 18197 / FERM 7344 / JCM 9153 / C-125) (Bacillus halodurans).